The following is a 277-amino-acid chain: Carbonyl reductase [NADPH] 1 (277 aa).

Position 2 is an N-acetylserine (S2). S2 and S30 each carry phosphoserine. NADP(+) is bound by residues 10-34 (VTGA…GDVV), 63-64 (DI), and N90. Glutathione is bound by residues 95–97 (FKV) and Q106. A substrate-binding site is contributed by S140. 193 to 194 (AY) contacts glutathione. Residue Y194 is the Proton acceptor of the active site. Residues 194 to 198 (YGVTK) and 231 to 233 (VRT) each bind NADP(+). K239 is modified (N6-1-carboxyethyl lysine). The interval 258-277 (PPDAEGPHGQFVQDKKVEPW) is disordered.

It belongs to the short-chain dehydrogenases/reductases (SDR) family. As to quaternary structure, monomer.

The protein resides in the cytoplasm. It catalyses the reaction a secondary alcohol + NADP(+) = a ketone + NADPH + H(+). The enzyme catalyses prostaglandin F2alpha + NADP(+) = prostaglandin E2 + NADPH + H(+). The catalysed reaction is prostaglandin E1 + NADP(+) = 15-oxoprostaglandin E1 + NADPH + H(+). It carries out the reaction menadione + NADPH + H(+) = menadiol + NADP(+). It catalyses the reaction prostaglandin D2 + NADP(+) = 15-oxoprostaglandin D2 + NADPH + H(+). The enzyme catalyses prostaglandin E2 + NADP(+) = 15-oxoprostaglandin E2 + NADPH + H(+). The catalysed reaction is prostaglandin F2alpha + NADP(+) = 15-oxoprostaglandin F2alpha + NADPH + H(+). It carries out the reaction daunorubicin + NADPH + H(+) = 13-dihydrodaunorubicin + NADP(+). It catalyses the reaction S-nitrosoglutathione + NADPH + H(+) = S-(hydroxysulfenamide)glutathione + NADP(+). The enzyme catalyses corticosterone + NADPH + H(+) = 20beta-dihydrocorticosterone + NADP(+). The catalysed reaction is a primary alcohol + NADP(+) = an aldehyde + NADPH + H(+). It carries out the reaction cortisol + NADPH + H(+) = 20beta-dihydrocortisol + NADP(+). NADPH-dependent reductase with broad substrate specificity. Catalyzes the reduction of a wide variety of carbonyl compounds including quinones, prostaglandins, menadione, plus various xenobiotics. Catalyzes the reduction of the antitumor anthracyclines doxorubicin and daunorubicin to the cardiotoxic compounds doxorubicinol and daunorubicinol. Can convert prostaglandin E to prostaglandin F2-alpha. Can bind glutathione, which explains its higher affinity for glutathione-conjugated substrates. Catalyzes the reduction of S-nitrosoglutathione. In addition, participates in the glucocorticoid metabolism by catalyzing the NADPH-dependent cortisol/corticosterone into 20beta-dihydrocortisol (20b-DHF) or 20beta-corticosterone (20b-DHB), which are weak agonists of NR3C1 and NR3C2 in adipose tissue. The chain is Carbonyl reductase [NADPH] 1 from Mus musculus (Mouse).